A 367-amino-acid chain; its full sequence is Nociceptin receptor (367 aa).

Topologically, residues methionine 1–leucine 45 are extracellular. Residues asparagine 21, asparagine 26, and asparagine 36 are each glycosylated (N-linked (GlcNAc...) asparagine). The chain crosses the membrane as a helical span at residues glycine 46–tyrosine 71. Residues valine 72 to asparagine 84 are Cytoplasmic-facing. A helical transmembrane segment spans residues isoleucine 85 to threonine 106. Topologically, residues aspartate 107–lysine 121 are extracellular. Residues cysteine 120 and cysteine 197 are joined by a disulfide bond. Residues threonine 122–valine 143 traverse the membrane as a helical segment. At aspartate 144–serine 162 the chain is on the cytoplasmic side. The chain crosses the membrane as a helical span at residues lysine 163 to methionine 185. Topologically, residues glycine 186–tryptophan 208 are extracellular. Residues glycine 209–serine 233 traverse the membrane as a helical segment. The Cytoplasmic segment spans residues leucine 234–leucine 261. A helical membrane pass occupies residues valine 262–valine 282. The Extracellular segment spans residues glutamine 283–isoleucine 297. The chain crosses the membrane as a helical span at residues leucine 298 to leucine 319. Residues aspartate 320–alanine 367 are Cytoplasmic-facing. Cysteine 331 carries the S-palmitoyl cysteine lipid modification.

The protein belongs to the G-protein coupled receptor 1 family. In terms of processing, phosphorylation at Ser-360 requires GRK3. In terms of tissue distribution, highly expressed in several brain areas, the intestine, liver and spleen. Detected in sympathetic stellate ganglion neurons.

The protein localises to the cell membrane. The protein resides in the cytoplasmic vesicle. G-protein coupled opioid receptor that functions as a receptor for the endogenous neuropeptide nociceptin. Ligand binding causes a conformation change that triggers signaling via guanine nucleotide-binding proteins (G proteins) and modulates the activity of down-stream effectors. Signaling via G proteins mediates inhibition of adenylate cyclase activity and calcium channel activity. Arrestins modulate signaling via G proteins and mediate the activation of alternative signaling pathways that lead to the activation of MAP kinases. Plays a role in modulating nociception and the perception of pain. Plays a role in the regulation of locomotor activity by the neuropeptide nociceptin. The protein is Nociceptin receptor (Oprl1) of Rattus norvegicus (Rat).